Here is a 2495-residue protein sequence, read N- to C-terminus: Non-reducing polyketide synthase adrD (2495 aa).

The segment at 14 to 252 (VVFGPQSSEI…HHSRHVTAVQ (239 aa)) is N-terminal acylcarrier protein transacylase domain (SAT). A Ketosynthase family 3 (KS3) domain is found at 386 to 807 (VIPIAITGMG…GSNAALVVKQ (422 aa)). Active-site for beta-ketoacyl synthase activity residues include Cys-551, His-686, and His-725. Residues 913–1222 (LCFGGQNGNE…QALDLGGALA (310 aa)) are malonyl-CoA:ACP transacylase (MAT) domain. Residue Ser-1000 is the For acyl/malonyl transferase activity of the active site. The N-terminal hotdog fold stretch occupies residues 1294-1422 (KEFVQLLTKQ…GEISLHPFGQ (129 aa)). Residues 1294-1601 (KEFVQLLTKQ…FTSVSIAGLS (308 aa)) form the PKS/mFAS DH domain. The interval 1295–1600 (EFVQLLTKQP…TFTSVSIAGL (306 aa)) is product template (PT) domain. His-1325 functions as the Proton acceptor; for dehydratase activity in the catalytic mechanism. The tract at residues 1450–1601 (ESSGLKGFAV…FTSVSIAGLS (152 aa)) is C-terminal hotdog fold. Asp-1508 acts as the Proton donor; for dehydratase activity in catalysis. Residues 1651-1725 (SGHFMVVQEM…TLVQTIFPDA (75 aa)) form the Carrier domain. At Ser-1685 the chain carries O-(pantetheine 4'-phosphoryl)serine. A methyltransferase (CMeT) domain region spans residues 1887–2120 (QHTSEHNLLR…GFQWVDWTYN (234 aa)). A thioesterase (TE) domain region spans residues 2150–2495 (YLMNEETIVY…YEFLRDHVRY (346 aa)). Residues Ser-2273 and Asp-2432 each act as for thioesterase activity in the active site.

It catalyses the reaction 3 malonyl-CoA + acetyl-CoA + 2 S-adenosyl-L-methionine = 3,5-dimethylorsellinate + 2 S-adenosyl-L-homocysteine + 3 CO2 + 4 CoA. Its pathway is secondary metabolite biosynthesis; terpenoid biosynthesis. Functionally, non-reducing polyketide synthase; part of the gene cluster that mediates the biosynthesis of andrastins, meroterpenoid compounds that exhibit inhibitory activity against ras farnesyltransferase, suggesting that they could be promising leads for antitumor agents. The first step of the pathway is the synthesis of 3,5-dimethylorsellinic acid (DMOA) by the polyketide synthase adrD via condensation of one acetyl-CoA starter unit with 3 malonyl-CoA units and 2 methylations. DMAO is then converted to farnesyl-DMAO by the prenyltransferase adrG. The methyltransferase adrK catalyzes the methylation of the carboxyl group of farnesyl-DMAO to farnesyl-DMAO methyl ester which is further converted to epoxyfarnesyl-DMAO methyl ester by the FAD-dependent monooxygenase adrH. The terpene cyclase adrI then catalyzes the carbon skeletal rearrangement to generate the andrastin E, the first compound in the pathway having the andrastin scaffold, with the tetracyclic ring system. The post-cyclization tailoring enzymes adrF, adrE, adrJ, and adrA, are involved in the conversion of andrastin E into andrastin A. The short chain dehydrogenase adrF is responsible for the oxidation of the C-3 a hydroxyl group of andrastin E to yield the corresponding ketone, andrastin D. The ketoreductase adrE stereoselectively reduces the carbonyl moiety to reverse the stereochemistry of the C-3 position to yield andrastin F. The acetyltransferase adrJ is the acetyltransferase that attaches the acetyl group to the C-3 hydroxyl group of andrastin F to yield andrastin C. Finally, the cytochrome P450 monooxygenase adrA catalyzes two sequential oxidation reactions of the C-23 methyl group, to generate the corresponding alcohol andrastin B, and aldehyde andrastin A. This is Non-reducing polyketide synthase adrD from Penicillium roqueforti.